A 188-amino-acid polypeptide reads, in one-letter code: MLLSDRDIRAAINSGELKIDPHDDQMVQPSSIDVRLDGLFRVFNNSKYTHIDPKQPQEELTTLVEVPDDEAFILHPGEFVLGATLECFGIPAHLAGRLEGKSSLGRLGLLTHSTAGFIDPGFTGHITLELSNTANLPIALYPGMKIGQLALFTMTSPAEAPYGSGTLGSKYQGQRGPTPSKAYLNFQN.

Residues Lys101–Arg106, Asp119, Thr127–Glu129, Gln148, Tyr162, and Gln174 contribute to the dCTP site. Glu129 (proton donor/acceptor) is an active-site residue.

This sequence belongs to the dCTP deaminase family. Homotrimer.

It carries out the reaction dCTP + 2 H2O = dUMP + NH4(+) + diphosphate. It functions in the pathway pyrimidine metabolism; dUMP biosynthesis; dUMP from dCTP: step 1/1. In terms of biological role, bifunctional enzyme that catalyzes both the deamination of dCTP to dUTP and the hydrolysis of dUTP to dUMP without releasing the toxic dUTP intermediate. The protein is dCTP deaminase, dUMP-forming of Corynebacterium jeikeium (strain K411).